Here is a 297-residue protein sequence, read N- to C-terminus: MPTSPTMTSVPIARSPRPSYQQINQHQPSDSALGLVSTRSFPAIVGTADMMLKSSQVTLVGYEKIGSGYCTAVVRGKVADVRLAVEEGARTAEQFGQLVSKLVIPRPMPNLQAVFPIGSHLVELAQQQRGYSRLSNRSIGLLETRGFPAMVGAADAMLKSADVQLASYEIIGDGLCTAIVRGTVANVAMAIEVGMQEAERIGELHAVMIIPRLLEDLEHTLPVATYWLDENEPLPMLLPNQVREKQRQLVALPELEKAVVPQRQAKPLPLQEKTEAPLVLEKEAEKPIVEVLGPEID.

Residues 1 to 29 form a disordered region; the sequence is MPTSPTMTSVPIARSPRPSYQQINQHQPS. Residues 18–29 show a composition bias toward polar residues; the sequence is PSYQQINQHQPS. BMC domains follow at residues 32-116 and 138-222; these read ALGL…AVFP and SIGL…HTLP.

This sequence belongs to the bacterial microcompartments protein family. In terms of assembly, homooligomerizes, possibly as a trimer, interacts with CcmK in the carboxysome.

The protein localises to the carboxysome. Required for formation of the carboxysome, a polyhedral inclusion where RuBisCO (ribulose bisphosphate carboxylase, rbcL-rbcS) is sequestered. Required for recruitment of major shell protein CcmK2 to the pre-carboxysome. Suggested to be a carboxysome shell protein. This is Carboxysome assembly protein CcmO from Synechocystis sp. (strain ATCC 27184 / PCC 6803 / Kazusa).